The chain runs to 871 residues: MADPGDGPRAAPGEVAEPPGDESGTSGGEAFPLSSLANLFEGEEGSSSLSPVDASRPAGPGDGRPNLRMKFQGAFRKGVPNPIDLLESTLYESSVVPGPKKAPMDSLFDYGTYRHHPSDNKRWRRKVVEKQPQSPKAPAPQPPPILKVFNRPILFDIVSRGSTADLDGLLSFLLTHKKRLTDEEFREPSTGKTCLPKALLNLSNGRNDTIPVLLDIAERTGNMREFINSPFRDIYYRGQTSLHIAIERRCKHYVELLVAQGADVHAQARGRFFQPKDEGGYFYFGELPLSLAACTNQPHIVNYLTENPHKKADMRRQDSRGNTVLHALVAIADNTRENTKFVTKMYDLLLLKCSRLFPDSNLETVLNNDGLSPLMMAAKTGKIGVFQHIIRREVTDEDTRHLSRKFKDWAYGPVYSSLYDLSSLDTCGEEVSVLEILVYNSKIENRHEMLAVEPINELLRDKWRKFGAVSFYINVVSYLCAMVIFTLTAYYQPLEGTPPYPYRTTVDYLRLAGEVITLFTGVLFFFTSIKDLFTKKCPGVNSLFVDGSFQLLYFIYSVLVVVSAALYLAGIEAYLAVMVFALVLGWMNALYFTRGLKLTGTYSIMIQKILFKDLFRFLLVYLLFMIGYASALVTLLNPCTNMKVCDEDQSNCTVPTYPACRDSETFSAFLLDLFKLTIGMGDLEMLSSAKYPVVFILLLVTYIILTFVLLLNMLIALMGETVGQVSKESKHIWKLQWATTILDIERSFPVFLRKAFRSGEMVTVGKSSDGTPDRRWCFRVDEVNWSHWNQNLGIINEDPGKSEIYQYYGFSHTVGRLRRDRWSSVVPRVVELNKNSSADEVVVPLDNLGNPNCDGHQQGYAPKWRTDDAPL.

Disordered stretches follow at residues 1 to 68 (MADP…PNLR) and 110 to 143 (YGTY…PQPP). Topologically, residues 1-469 (MADPGDGPRA…RDKWRKFGAV (469 aa)) are cytoplasmic. Tyrosine 110 carries the post-translational modification Phosphotyrosine; by SRC-type Tyr-kinases. Residues 116 to 129 (HPSDNKRWRRKVVE) show a composition bias toward basic and acidic residues. ATP contacts are provided by residues lysine 192, lysine 197, asparagine 201, 236–239 (YRGQ), and arginine 248. ANK repeat units lie at residues 237 to 266 (RGQT…DVHA) and 284 to 313 (FGEL…KKAD). An a 1,2-diacyl-sn-glycero-3-phospho-(1D-myo-inositol-4,5-bisphosphate)-binding site is contributed by 249–251 (RCK). Tyrosine 253 carries the post-translational modification Phosphotyrosine; by LYN. A 1,2-diacyl-sn-glycero-3-phospho-(1D-myo-inositol-4,5-bisphosphate)-binding positions include 296-299 (NQPH) and lysine 344. Residues 369-398 (DGLSPLMMAAKTGKIGVFQHIIRREVTDED) form an ANK 3 repeat. The helical transmembrane segment at 470 to 490 (SFYINVVSYLCAMVIFTLTAY) threads the bilayer. At 491-507 (YQPLEGTPPYPYRTTVD) the chain is on the extracellular side. Residues 508-534 (YLRLAGEVITLFTGVLFFFTSIKDLFT) form a helical membrane-spanning segment. At 535-547 (KKCPGVNSLFVDG) the chain is on the cytoplasmic side. A helical transmembrane segment spans residues 548-568 (SFQLLYFIYSVLVVVSAALYL). Topologically, residues 569–572 (AGIE) are extracellular. A helical membrane pass occupies residues 573-593 (AYLAVMVFALVLGWMNALYFT). Residues 594-608 (RGLKLTGTYSIMIQK) lie on the Cytoplasmic side of the membrane. A helical transmembrane segment spans residues 609–636 (ILFKDLFRFLLVYLLFMIGYASALVTLL). Topologically, residues 637 to 665 (NPCTNMKVCDEDQSNCTVPTYPACRDSET) are extracellular. A glycan (N-linked (GlcNAc...) asparagine) is linked at asparagine 651. Positions 666-685 (FSAFLLDLFKLTIGMGDLEM) form an intramembrane region, pore-forming. Residues 679 to 682 (GMGD) carry the Selectivity filter motif. Residue aspartate 682 participates in Ca(2+) binding. Residues 686–693 (LSSAKYPV) are Extracellular-facing. The chain crosses the membrane as a helical span at residues 694–722 (VFILLLVTYIILTFVLLLNMLIALMGETV). The Cytoplasmic segment spans residues 723 to 871 (GQVSKESKHI…PKWRTDDAPL (149 aa)). A Phosphotyrosine; by SRC-type Tyr-kinases modification is found at tyrosine 805. The interaction with calmodulin and ITPR3 stretch occupies residues 812-831 (HTVGRLRRDRWSSVVPRVVE). The residue at position 824 (serine 824) is a Phosphoserine; by PKC and PKA. The segment at 850–871 (NPNCDGHQQGYAPKWRTDDAPL) is disordered.

Belongs to the transient receptor (TC 1.A.4) family. TrpV subfamily. TRPV4 sub-subfamily. Homotetramer. Interacts with calmodulin. Interacts with CTNNB1. The TRPV4 and CTNNB1 complex can interact with CDH1. Part of a complex containing MLC1, AQP4, HEPACAM and ATP1B1. Interacts with MAP7 and Src family Tyr protein kinases LYN, SRC, FYN, HCK, LCK and YES. Interacts with PACSIN1, PACSIN2 and PACSIN3 (via SH3 domain). Interacts with ITPR3. Interacts with AQP5; the interaction is probably indirect and regulates TRPV4 activation by hypotonicity. Interacts with ANO1. Interacts (via C-terminus) with PKD2 (via C-terminus). Interacts with DDX3X; this interaction is decreased when the channel is activated. N-glycosylated. In terms of tissue distribution, detected in liver, kidney, heart, brain cortex, cerebellum and brainstem (at protein level). Expressed in salivary glands (at protein level). Expressed in heart, lung, spleen, liver, kidney, brain, skeletal muscle and testis. In the central nervous system, expressed in the lamina terminalis (arched vascular organ and neurons of the subfornical organ), median preoptic area, ventral hippocampal commissure, and ependymal cells of the choroid plexus. In the cochlea, expressed in both inner and outer hair cells, and in marginal cells of the cochlear stria vascularis. Expressed in large neurons of the trigeminal ganglion. In the kidney cortex, strongly expressed by epithelial cells of tubules and much weaker in glomeruli.

The protein localises to the cell membrane. The protein resides in the apical cell membrane. It is found in the cell junction. Its subcellular location is the adherens junction. It localises to the cell projection. The protein localises to the cilium. It carries out the reaction Ca(2+)(in) = Ca(2+)(out). In terms of biological role, non-selective calcium permeant cation channel involved in osmotic sensitivity and mechanosensitivity. Activation by exposure to hypotonicity within the physiological range exhibits an outward rectification. Also activated by heat, low pH, citrate and phorbol esters. Increase of intracellular Ca(2+) potentiates currents. Channel activity seems to be regulated by a calmodulin-dependent mechanism with a negative feedback mechanism. Acts as a regulator of intracellular Ca(2+) in synoviocytes. Plays an obligatory role as a molecular component in the nonselective cation channel activation induced by 4-alpha-phorbol 12,13-didecanoate and hypotonic stimulation in synoviocytes and also regulates production of IL-8. Together with PKD2, forms mechano- and thermosensitive channels in cilium. Promotes cell-cell junction formation in skin keratinocytes and plays an important role in the formation and/or maintenance of functional intercellular barriers. Negatively regulates expression of PPARGC1A, UCP1, oxidative metabolism and respiration in adipocytes. Regulates expression of chemokines and cytokines related to pro-inflammatory pathway in adipocytes. Together with AQP5, controls regulatory volume decrease in salivary epithelial cells. Required for normal development and maintenance of bone and cartilage. In its inactive state, may sequester DDX3X at the plasma membrane. When activated, the interaction between both proteins is affected and DDX3X relocalizes to the nucleus. In neurons of the central nervous system, could play a role in triggering voluntary water intake in response to increased sodium concentration in body fluid. The polypeptide is Transient receptor potential cation channel subfamily V member 4 (Trpv4) (Mus musculus (Mouse)).